Consider the following 263-residue polypeptide: Trans-aconitate 2-methyltransferase (263 aa).

Belongs to the methyltransferase superfamily. Tam family.

Its subcellular location is the cytoplasm. It carries out the reaction trans-aconitate + S-adenosyl-L-methionine = (E)-3-(methoxycarbonyl)pent-2-enedioate + S-adenosyl-L-homocysteine. In terms of biological role, catalyzes the S-adenosylmethionine monomethyl esterification of trans-aconitate. The sequence is that of Trans-aconitate 2-methyltransferase from Mycobacterium marinum (strain ATCC BAA-535 / M).